The primary structure comprises 362 residues: Aminomethyltransferase (362 aa).

The protein belongs to the GcvT family. In terms of assembly, the glycine cleavage system is composed of four proteins: P, T, L and H.

The catalysed reaction is N(6)-[(R)-S(8)-aminomethyldihydrolipoyl]-L-lysyl-[protein] + (6S)-5,6,7,8-tetrahydrofolate = N(6)-[(R)-dihydrolipoyl]-L-lysyl-[protein] + (6R)-5,10-methylene-5,6,7,8-tetrahydrofolate + NH4(+). The glycine cleavage system catalyzes the degradation of glycine. This chain is Aminomethyltransferase, found in Listeria welshimeri serovar 6b (strain ATCC 35897 / DSM 20650 / CCUG 15529 / CIP 8149 / NCTC 11857 / SLCC 5334 / V8).